The primary structure comprises 366 residues: UDP-N-acetylglucosamine--N-acetylmuramyl-(pentapeptide) pyrophosphoryl-undecaprenol N-acetylglucosamine transferase (366 aa).

UDP-N-acetyl-alpha-D-glucosamine contacts are provided by residues 10–12, asparagine 124, serine 195, and glutamine 295; that span reads TGG.

This sequence belongs to the glycosyltransferase 28 family. MurG subfamily.

The protein resides in the cell membrane. The catalysed reaction is di-trans,octa-cis-undecaprenyl diphospho-N-acetyl-alpha-D-muramoyl-L-alanyl-D-glutamyl-meso-2,6-diaminopimeloyl-D-alanyl-D-alanine + UDP-N-acetyl-alpha-D-glucosamine = di-trans,octa-cis-undecaprenyl diphospho-[N-acetyl-alpha-D-glucosaminyl-(1-&gt;4)]-N-acetyl-alpha-D-muramoyl-L-alanyl-D-glutamyl-meso-2,6-diaminopimeloyl-D-alanyl-D-alanine + UDP + H(+). It functions in the pathway cell wall biogenesis; peptidoglycan biosynthesis. Cell wall formation. Catalyzes the transfer of a GlcNAc subunit on undecaprenyl-pyrophosphoryl-MurNAc-pentapeptide (lipid intermediate I) to form undecaprenyl-pyrophosphoryl-MurNAc-(pentapeptide)GlcNAc (lipid intermediate II). The sequence is that of UDP-N-acetylglucosamine--N-acetylmuramyl-(pentapeptide) pyrophosphoryl-undecaprenol N-acetylglucosamine transferase from Bacillus licheniformis (strain ATCC 14580 / DSM 13 / JCM 2505 / CCUG 7422 / NBRC 12200 / NCIMB 9375 / NCTC 10341 / NRRL NRS-1264 / Gibson 46).